The following is an 88-amino-acid chain: ATP synthase subunit 9, mitochondrial (88 aa).

2 helical membrane passes run 30–50 (IGLT…ILAV) and 66–86 (LGFA…FLIL).

This sequence belongs to the ATPase C chain family. F-type ATPases have 2 components, CF(1) - the catalytic core - and CF(0) - the membrane proton channel. CF(1) has five subunits: alpha(3), beta(3), gamma(1), delta(1), epsilon(1). CF(0) has three main subunits: a, b and c.

The protein resides in the mitochondrion membrane. Functionally, mitochondrial membrane ATP synthase (F(1)F(0) ATP synthase or Complex V) produces ATP from ADP in the presence of a proton gradient across the membrane which is generated by electron transport complexes of the respiratory chain. F-type ATPases consist of two structural domains, F(1) - containing the extramembraneous catalytic core and F(0) - containing the membrane proton channel, linked together by a central stalk and a peripheral stalk. During catalysis, ATP synthesis in the catalytic domain of F(1) is coupled via a rotary mechanism of the central stalk subunits to proton translocation. Part of the complex F(0) domain. A homomeric c-ring of probably 10 subunits is part of the complex rotary element. This is ATP synthase subunit 9, mitochondrial (atp9) from Dictyostelium citrinum (Slime mold).